Consider the following 212-residue polypeptide: ATP phosphoribosyltransferase (212 aa).

The protein belongs to the ATP phosphoribosyltransferase family. Short subfamily. As to quaternary structure, heteromultimer composed of HisG and HisZ subunits.

The protein localises to the cytoplasm. It carries out the reaction 1-(5-phospho-beta-D-ribosyl)-ATP + diphosphate = 5-phospho-alpha-D-ribose 1-diphosphate + ATP. Its pathway is amino-acid biosynthesis; L-histidine biosynthesis; L-histidine from 5-phospho-alpha-D-ribose 1-diphosphate: step 1/9. Catalyzes the condensation of ATP and 5-phosphoribose 1-diphosphate to form N'-(5'-phosphoribosyl)-ATP (PR-ATP). Has a crucial role in the pathway because the rate of histidine biosynthesis seems to be controlled primarily by regulation of HisG enzymatic activity. The polypeptide is ATP phosphoribosyltransferase (Prochlorococcus marinus (strain AS9601)).